Here is a 195-residue protein sequence, read N- to C-terminus: Ciliary neurotrophic factor (195 aa).

This sequence belongs to the CNTF family. As to expression, nervous system.

It localises to the cytoplasm. Its function is as follows. CNTF is a survival factor for various neuronal cell types. Seems to prevent the degeneration of motor axons after axotomy. The polypeptide is Ciliary neurotrophic factor (CNTF) (Gallus gallus (Chicken)).